A 261-amino-acid polypeptide reads, in one-letter code: UPF0328 protein ECU06_0100 (261 aa).

The protein belongs to the UPF0328 family.

In Encephalitozoon cuniculi (strain GB-M1) (Microsporidian parasite), this protein is UPF0328 protein ECU06_0100.